The chain runs to 169 residues: Disulfide bond formation protein B (169 aa).

Residues 1–13 lie on the Cytoplasmic side of the membrane; sequence MSQLQQFCHNRFS. Residues 14–30 traverse the membrane as a helical segment; the sequence is WGLLLLSAIGLELAALF. The Periplasmic segment spans residues 31-48; sequence FQYGMDLAPCVMCIYIRV. Residues C40 and C43 are joined by a disulfide bond. Residues 49-64 form a helical membrane-spanning segment; it reads AVLGIILAALIGILQP. Over 65–71 the chain is Cytoplasmic; the sequence is KVWLLRL. The chain crosses the membrane as a helical span at residues 72–89; that stretch reads VGMAGWAVSAVWGFKLAY. The Periplasmic segment spans residues 90–144; that stretch reads ELNQMQVNPSPFATCSFYPEFPSFMPLDTWLPSVFSPTGMCSDSPWSWLSVSMAQ. An intrachain disulfide couples C104 to C130. A helical membrane pass occupies residues 145–163; sequence WMMLGFAIYGVIWLLMLLP. At 164–169 the chain is on the cytoplasmic side; it reads ALKSAK.

The protein belongs to the DsbB family.

It is found in the cell inner membrane. Required for disulfide bond formation in some periplasmic proteins. Acts by oxidizing the DsbA protein. This Shewanella frigidimarina (strain NCIMB 400) protein is Disulfide bond formation protein B.